The primary structure comprises 465 residues: Methylenetetrahydrofolate--tRNA-(uracil-5-)-methyltransferase TrmFO (465 aa).

3–8 contacts FAD; the sequence is GAGLAG.

Belongs to the MnmG family. TrmFO subfamily. FAD serves as cofactor.

Its subcellular location is the cytoplasm. It catalyses the reaction uridine(54) in tRNA + (6R)-5,10-methylene-5,6,7,8-tetrahydrofolate + NADH + H(+) = 5-methyluridine(54) in tRNA + (6S)-5,6,7,8-tetrahydrofolate + NAD(+). The catalysed reaction is uridine(54) in tRNA + (6R)-5,10-methylene-5,6,7,8-tetrahydrofolate + NADPH + H(+) = 5-methyluridine(54) in tRNA + (6S)-5,6,7,8-tetrahydrofolate + NADP(+). Its function is as follows. Catalyzes the folate-dependent formation of 5-methyl-uridine at position 54 (M-5-U54) in all tRNAs. This is Methylenetetrahydrofolate--tRNA-(uracil-5-)-methyltransferase TrmFO from Bradyrhizobium sp. (strain ORS 278).